A 218-amino-acid polypeptide reads, in one-letter code: Phosphatidylserine decarboxylase proenzyme (218 aa).

The Schiff-base intermediate with substrate; via pyruvic acid role is filled by S187. Pyruvic acid (Ser); by autocatalysis is present on S187.

It belongs to the phosphatidylserine decarboxylase family. PSD-A subfamily. As to quaternary structure, heterodimer of a large membrane-associated beta subunit and a small pyruvoyl-containing alpha subunit. Requires pyruvate as cofactor. In terms of processing, is synthesized initially as an inactive proenzyme. Formation of the active enzyme involves a self-maturation process in which the active site pyruvoyl group is generated from an internal serine residue via an autocatalytic post-translational modification. Two non-identical subunits are generated from the proenzyme in this reaction, and the pyruvate is formed at the N-terminus of the alpha chain, which is derived from the carboxyl end of the proenzyme. The post-translation cleavage follows an unusual pathway, termed non-hydrolytic serinolysis, in which the side chain hydroxyl group of the serine supplies its oxygen atom to form the C-terminus of the beta chain, while the remainder of the serine residue undergoes an oxidative deamination to produce ammonia and the pyruvoyl prosthetic group on the alpha chain.

Its subcellular location is the cell membrane. It catalyses the reaction a 1,2-diacyl-sn-glycero-3-phospho-L-serine + H(+) = a 1,2-diacyl-sn-glycero-3-phosphoethanolamine + CO2. It participates in phospholipid metabolism; phosphatidylethanolamine biosynthesis; phosphatidylethanolamine from CDP-diacylglycerol: step 2/2. Functionally, catalyzes the formation of phosphatidylethanolamine (PtdEtn) from phosphatidylserine (PtdSer). This is Phosphatidylserine decarboxylase proenzyme from Geobacter sulfurreducens (strain ATCC 51573 / DSM 12127 / PCA).